The chain runs to 278 residues: Elongation factor Ts (278 aa).

The involved in Mg(2+) ion dislocation from EF-Tu stretch occupies residues 80 to 83 (TDFV).

This sequence belongs to the EF-Ts family.

It is found in the cytoplasm. Associates with the EF-Tu.GDP complex and induces the exchange of GDP to GTP. It remains bound to the aminoacyl-tRNA.EF-Tu.GTP complex up to the GTP hydrolysis stage on the ribosome. The polypeptide is Elongation factor Ts (Arthrobacter sp. (strain FB24)).